Reading from the N-terminus, the 278-residue chain is SLAM family member 8 (278 aa).

The N-terminal stretch at 1 to 20 (MWSLWSLLLFEALLPVVVVS) is a signal peptide. The Extracellular segment spans residues 21–231 (VQVLSKVGDS…AASGKASYKD (211 aa)). Residues Asn-83 and Asn-154 are each glycosylated (N-linked (GlcNAc...) asparagine). The Ig-like C2-type domain occupies 126–213 (PEVQVFTAAA…PVSWDMTTVT (88 aa)). A disulfide bridge links Cys-150 with Cys-199. A helical membrane pass occupies residues 232–252 (VLLVVVPITLFLILAGLFGAW). Topologically, residues 253-278 (HHGLCSGKKKDACTDGVLPETENALV) are cytoplasmic.

The protein localises to the membrane. May play a role in B-lineage commitment and/or modulation of signaling through the B-cell receptor. This chain is SLAM family member 8 (Slamf8), found in Mus musculus (Mouse).